A 582-amino-acid polypeptide reads, in one-letter code: Protein NARROW LEAF 1 (582 aa).

Disordered regions lie at residues 1 to 26 and 531 to 582; these read MKPS…VDHQ and GMSP…DLEK. Over residues 562 to 572 the composition is skewed to basic and acidic residues; it reads LGDREPKRLRS. A Nuclear localization signal motif is present at residues 567–573; it reads PKRLRSD. Residues 573-582 show a composition bias toward low complexity; it reads DSGSSLDLEK.

Expressed in leaf sheaths, leaf blades, culms and panicles. Preferentially expressed in vascular tissues in leaves and culms.

It localises to the nucleus. It is found in the nucleoplasm. The protein resides in the cytoplasm. Its function is as follows. Involved in the regulation of lateral leaf growth. May be involved in the regulation of basipetal polar auxin transport (PAT) and vascular patterning in leaves. Controls photosynthesis rate by regulating carboxylation efficiency and consequently photosynthesis rate. Controls panicle and spikelet numbers, and grain yield. The polypeptide is Protein NARROW LEAF 1 (Oryza sativa subsp. japonica (Rice)).